An 81-amino-acid polypeptide reads, in one-letter code: Conotoxin Eb11.3 (81 aa).

The N-terminal stretch at 1–23 (MMFRLTSVWCLLVIVLLNSAVDG) is a signal peptide. 4 cysteine pairs are disulfide-bonded: C27–C41, C34–C48, C40–C56, and C47–C62. Leucine amide is present on L69. A propeptide spanning residues 73–81 (AQYKRFFRR) is cleaved from the precursor.

This sequence belongs to the conotoxin I2 superfamily. As to expression, expressed by the venom duct.

Its subcellular location is the secreted. The polypeptide is Conotoxin Eb11.3 (Conus eburneus (Ivory cone)).